Reading from the N-terminus, the 519-residue chain is Protein amnionless (519 aa).

An N-terminal signal peptide occupies residues 1-19 (MGAPGRVLLWLQLCALTRA). Residues 20–430 (AYKLWVPNTY…NAPGARSDLM (411 aa)) are Extracellular-facing. N-linked (GlcNAc...) asparagine glycosylation is found at Asn35 and Asn39. Cystine bridges form between Cys43-Cys152, Cys193-Cys267, Cys259-Cys265, Cys277-Cys303, Cys288-Cys304, and Cys293-Cys307. Positions 67–143 (SDMEELQDRK…VLASGAGFSA (77 aa)) are interaction with CUBN. A VWFC domain is found at 256-308 (PEACADPSGCVCGNAEVQPWICAALLQPLGGRCPQAACQDALRPEGQCCDLCG). The helical transmembrane segment at 431 to 451 (GGLVAALLLLLLVLLVAALLL) threads the bilayer. The Cytoplasmic portion of the chain corresponds to 452–519 (RRAGRLRWSR…YGEAEAEAEA (68 aa)).

In terms of assembly, interacts (via extracellular region) with CUBN/cubilin, giving rise to a huge complex containing one AMN chain and three CUBN chains. In terms of processing, N-glycosylated. Post-translationally, a soluble form arises by proteolytic removal of the membrane anchor. Detected in kidney cortex (at protein level).

It localises to the apical cell membrane. Its subcellular location is the cell membrane. The protein resides in the endosome membrane. The protein localises to the membrane. It is found in the coated pit. Functionally, membrane-bound component of the endocytic receptor formed by AMN and CUBN. Required for normal CUBN glycosylation and trafficking to the cell surface. The complex formed by AMN and CUBN is required for efficient absorption of vitamin B12. Required for normal CUBN-mediated protein transport in the kidney. The polypeptide is Protein amnionless (AMN) (Sus scrofa (Pig)).